The chain runs to 318 residues: NADH-ubiquinone oxidoreductase chain 1 (318 aa).

8 helical membrane-spanning segments follow: residues 2–22, 70–90, 100–120, 147–167, 171–191, 217–237, 253–273, and 294–314; these read FMINVLLLIVPILLAVAFLTL, MFIIAPILALTLALTMWIPLP, LGILFMLAMSSLAVYSILWSG, AIILLSVLLMSGSFTLSTLII, YLWLIFPSWPLAMMWFISTLA, AGPFALFFLAEYANIIMMNIF, ELYSINFTIKALLLTCSFLWI, and LPLTLALCMWHVSLPIMLSSI.

It belongs to the complex I subunit 1 family. Core subunit of respiratory chain NADH dehydrogenase (Complex I) which is composed of 45 different subunits.

Its subcellular location is the mitochondrion inner membrane. It carries out the reaction a ubiquinone + NADH + 5 H(+)(in) = a ubiquinol + NAD(+) + 4 H(+)(out). Functionally, core subunit of the mitochondrial membrane respiratory chain NADH dehydrogenase (Complex I) which catalyzes electron transfer from NADH through the respiratory chain, using ubiquinone as an electron acceptor. Essential for the catalytic activity and assembly of complex I. The protein is NADH-ubiquinone oxidoreductase chain 1 (MT-ND1) of Equus caballus (Horse).